We begin with the raw amino-acid sequence, 41 residues long: MTQIKVPTALIASVHGEGQHLFEPMAARCTCTTIISSSSTF.

Residues 1–27 (MTQIKVPTALIASVHGEGQHLFEPMAA) constitute a propeptide that is removed on maturation. An N2,N2-dimethylarginine modification is found at R28. The segment at residues 28–29 (RC) is a cross-link (thiazole-4-carboxylic acid (Arg-Cys)). 2 cross-links (5-methyloxazole-4-carboxylic acid (Cys-Thr)) span residues 29–30 (CT) and 31–32 (CT). Positions 30–31 (TC) form a cross-link, thiazole-4-carboxylic acid (Thr-Cys). A cross-link (5-methyloxazole-4-carboxylic acid (Thr-Thr)) is located at residues 32–33 (TT). The oxazole-4-carboxylic acid (Ile-Ser) cross-link spans 35–36 (IS). Cross-links (oxazole-4-carboxylic acid (Ser-Ser)) lie at residues 36–37 (SS), 37–38 (SS), and 38–39 (SS). The segment at residues 39–40 (ST) is a cross-link (5-methyloxazoline-4-carboxylic acid (Ser-Thr)).

In terms of processing, maturation of thiazole and oxazole containing antibiotics involves the enzymatic condensation of a Cys, Ser or Thr with the alpha-carbonyl of the preceding amino acid to form a thioether or ether bond, then dehydration to form a double bond with the alpha-amino nitrogen. Thiazoline or oxazoline ring are dehydrogenated to form thiazole or oxazole rings. 2 forms exist: plantazolicin A and plantazolicin B. The structural difference between them is a dimethylation at Arg-28 in plantazolicin A.

The protein resides in the secreted. Its subcellular location is the cell wall. Peptide antibiotic inhibiting growth of Gram-positive bacteria in the dimethylated form plantazolicin A. The desmethyl form plantazolicin B has no antibiotic activity. The mode of action appears to be disruption of cell walls and lysis of cells. Inhibits B.subtilis strain HB0042, B.megaterium strain 7A1 and B.anthracis (MIC=2-4 ug/ml). Weakly inhibits Gram-positive bacteria B.brevis strain ATCC 8246, B.subtilis strain 168, B.cereus strain ATCC 14579 and strain CU1065, B.licheniformis strain ATCC 9789, M.luteus, B.sphaericus, P.granivorans and S.pyogenes (MIC=128 ug/ml). Does not inhibit B.pumilus, P.polymyxa, Arthrobacter sp., S.aureus, vancomycin-resistant E.faecalis, L.monocytogenes, methicillin-resistant S.aureus or Gram-negative bacteria E.coli strain K12, K.terrigena, Pseudomonas sp. and E.carotovora. The protein is Plantazolicin of Bacillus velezensis (strain DSM 23117 / BGSC 10A6 / LMG 26770 / FZB42) (Bacillus amyloliquefaciens subsp. plantarum).